The sequence spans 208 residues: Elongation factor Ts, chloroplastic (208 aa).

The protein belongs to the EF-Ts family.

The protein localises to the plastid. Its subcellular location is the chloroplast. Functionally, associates with the EF-Tu.GDP complex and induces the exchange of GDP to GTP. It remains bound to the aminoacyl-tRNA.EF-Tu.GTP complex up to the GTP hydrolysis stage on the ribosome. The protein is Elongation factor Ts, chloroplastic (tsf) of Cyanidium caldarium (Red alga).